Consider the following 260-residue polypeptide: DNA-binding protein RFXANK (260 aa).

The tract at residues 1 to 79 (MELTQPAEDL…STTLTNRQRG (79 aa)) is disordered. Acidic residues predominate over residues 22–33 (GDPEDPGEEAAD). Polar residues predominate over residues 57-77 (SVSSPQAGSSLKHSTTLTNRQ). 5 ANK repeats span residues 89-118 (LDSLSIHQLAAQGELDQLKEHLRKGDNLVN), 123-152 (RGFTPLIWASAFGEIETVRFLLEWGADPHI), 156-185 (ERESALSLASTGGYTDIVGLLLERDVDINI), 189-218 (NGGTPLLYAVRGNHVKCVEALLARGADLTT), and 222-251 (SGYTPMDLAVALGYRKVQQVIENHILKLFQ).

Forms homodimers. The RFX heterotetrameric complex consists of 2 molecules of RFX5 and one each of RFXAP and RFX-B/RFXANK; with each subunit representing a separate complementation group. Interacts (via ankyrin repeats) with RFX5 (via PxLPxI/L motif); the interaction is direct. RFX forms cooperative DNA binding complexes with X2BP and CBF/NF-Y. RFX associates with CIITA to form an active transcriptional complex. Interacts with RAF1. Interacts (via ankyrin repeats) with RFX7 (via PxLPxI/L motif). Phosphorylated by RAF1. Ubiquitous.

The protein localises to the cytoplasm. It is found in the nucleus. Functionally, activates transcription from class II MHC promoters. Activation requires the activity of the MHC class II transactivator/CIITA. May regulate other genes in the cell. RFX binds the X1 box of MHC-II promoters. May also potentiate the activation of RAF1. Isoform 2 is not involved in the positive regulation of MHC class II genes. The chain is DNA-binding protein RFXANK (RFXANK) from Homo sapiens (Human).